Consider the following 419-residue polypeptide: MIDLKLLRENPDVVRESQRIRGEDPALVDQLLEADEKRREAIKSADDLRAEHKAFGKKISQASPEERPALLEGSNELKSRVKAAEEAEAEALAKVNEIQMLFGNVVTDAPAGGEDDYIVLEHVGTPRTFDFEPKDHLDLGESLGLIDVKRGTKVGGARFYYLTGDGAFLQLGMLNLAAQKARENGFQLMIPPVLVRPEVMSGTGFLGAHSDEIYYLERDDLYLVGTSEVALAGYHQDEIIDLSDGPIKYAGWSSCFRREAGSYGKDTRGILRVHQFDKLEMFVYCKPEEAVAQHQALLNMEREMLAAVEVPYRIIDVAGGDLGSSAARKFDTEAWIPTQNTYRELTSTSNCTTFQARRLRTRYRDESGKAHTAATLNGTLATTRWLVAILENNQQADGSVIVPEALRPFVGKEVLEPKK.

226-228 (TSE) serves as a coordination point for L-serine. ATP-binding positions include 257-259 (RRE) and Val273. Glu280 is an L-serine binding site. Position 344-347 (344-347 (ELTS)) interacts with ATP. Thr379 contacts L-serine.

It belongs to the class-II aminoacyl-tRNA synthetase family. Type-1 seryl-tRNA synthetase subfamily. In terms of assembly, homodimer. The tRNA molecule binds across the dimer.

The protein localises to the cytoplasm. It catalyses the reaction tRNA(Ser) + L-serine + ATP = L-seryl-tRNA(Ser) + AMP + diphosphate + H(+). It carries out the reaction tRNA(Sec) + L-serine + ATP = L-seryl-tRNA(Sec) + AMP + diphosphate + H(+). The protein operates within aminoacyl-tRNA biosynthesis; selenocysteinyl-tRNA(Sec) biosynthesis; L-seryl-tRNA(Sec) from L-serine and tRNA(Sec): step 1/1. Catalyzes the attachment of serine to tRNA(Ser). Is also able to aminoacylate tRNA(Sec) with serine, to form the misacylated tRNA L-seryl-tRNA(Sec), which will be further converted into selenocysteinyl-tRNA(Sec). The polypeptide is Serine--tRNA ligase (Corynebacterium diphtheriae (strain ATCC 700971 / NCTC 13129 / Biotype gravis)).